The following is a 125-amino-acid chain: SOSS complex subunit C homolog B (125 aa).

2 disordered regions span residues 44 to 73 (PAPQLLGQPTTTTATPDLVSTNSTPPRAAF) and 105 to 125 (PATPSTTTPPITPIANANNPK).

The protein belongs to the SOSS-C family.

This chain is SOSS complex subunit C homolog B, found in Drosophila willistoni (Fruit fly).